A 37-amino-acid chain; its full sequence is MKVRPSVKPICEKCKVIKRKGKVMIICENPKHKQRQG.

Belongs to the bacterial ribosomal protein bL36 family.

The sequence is that of Large ribosomal subunit protein bL36 from Staphylococcus carnosus (strain TM300).